The chain runs to 200 residues: Glutathione peroxidase 1 (200 aa).

Ser-31 bears the Phosphoserine mark. Residue Sec-46 is part of the active site. Residue Sec-46 is a non-standard amino acid, selenocysteine. Lys-85 and Lys-111 each carry N6-acetyllysine; alternate. 2 positions are modified to N6-succinyllysine; alternate: Lys-85 and Lys-111. The residue at position 118 (Lys-118) is an N6-acetyllysine. An N6-acetyllysine; alternate modification is found at Lys-145. N6-succinyllysine; alternate is present on Lys-145. The residue at position 194 (Ser-194) is a Phosphoserine.

The protein belongs to the glutathione peroxidase family. Homotetramer. Interacts with MIEN1. In terms of processing, during periods of oxidative stress, Sec-46 may react with a superoxide radical, irreversibly lose hydroselenide and be converted to dehydroalanine.

The protein localises to the cytoplasm. It localises to the mitochondrion. The enzyme catalyses 2 glutathione + H2O2 = glutathione disulfide + 2 H2O. It carries out the reaction a hydroperoxy polyunsaturated fatty acid + 2 glutathione = a hydroxy polyunsaturated fatty acid + glutathione disulfide + H2O. It catalyses the reaction tert-butyl hydroperoxide + 2 glutathione = tert-butanol + glutathione disulfide + H2O. The catalysed reaction is cumene hydroperoxide + 2 glutathione = 2-phenylpropan-2-ol + glutathione disulfide + H2O. The enzyme catalyses (13S)-hydroperoxy-(9Z,11E)-octadecadienoate + 2 glutathione = (13S)-hydroxy-(9Z,11E)-octadecadienoate + glutathione disulfide + H2O. It carries out the reaction (9S)-hydroperoxy-(10E,12Z)-octadecadienoate + 2 glutathione = (9S)-hydroxy-(10E,12Z)-octadecadienoate + glutathione disulfide + H2O. It catalyses the reaction (5S)-hydroperoxy-(6E,8Z,11Z,14Z)-eicosatetraenoate + 2 glutathione = (5S)-hydroxy-(6E,8Z,11Z,14Z)-eicosatetraenoate + glutathione disulfide + H2O. The catalysed reaction is (12S)-hydroperoxy-(5Z,8Z,10E,14Z)-eicosatetraenoate + 2 glutathione = (12S)-hydroxy-(5Z,8Z,10E,14Z)-eicosatetraenoate + glutathione disulfide + H2O. The enzyme catalyses (12R)-hydroperoxy-(5Z,8Z,10E,14Z)-eicosatetraenoate + 2 glutathione = (12R)-hydroxy-(5Z,8Z,10E,14Z)-eicosatetraenoate + glutathione disulfide + H2O. It carries out the reaction (15S)-hydroperoxy-(5Z,8Z,11Z,13E)-eicosatetraenoate + 2 glutathione = (15S)-hydroxy-(5Z,8Z,11Z,13E)-eicosatetraenoate + glutathione disulfide + H2O. It catalyses the reaction (5S)-hydroperoxy-(6E,8Z,11Z,14Z,17Z)-eicosapentaenoate + 2 glutathione = (5S)-hydroxy-(6E,8Z,11Z,14Z,17Z)-eicosapentaenoate + glutathione disulfide + H2O. The catalysed reaction is (12S)-hydroperoxy-(5Z,8Z,10E,14Z,17Z)-eicosapentaenoate + 2 glutathione = (12S)-hydroxy-(5Z,8Z,10E,14Z,17Z)-eicosapentaenoate + glutathione disulfide + H2O. The enzyme catalyses (15S)-hydroperoxy-(5Z,8Z,11Z,13E,17Z)-eicosapentaenoate + 2 glutathione = (15S)-hydroxy-(5Z,8Z,11Z,13E,17Z)-eicosapentaenoate + glutathione disulfide + H2O. It carries out the reaction (15S)-hydroperoxy-(11Z,13E)-eicosadienoate + 2 glutathione = (15S)-hydroxy-(11Z,13E)-eicosadienoate + glutathione disulfide + H2O. It catalyses the reaction (17S)-hydroperoxy-(4Z,7Z,10Z,13Z,15E,19Z)-docosahexaenoate + 2 glutathione = (17S)-hydroxy-(4Z,7Z,10Z,13Z,15E,19Z)-docosahexaenoate + glutathione disulfide + H2O. Its function is as follows. Catalyzes the reduction of hydroperoxides in a glutathione-dependent manner thus regulating cellular redox homeostasis. Can reduce small soluble hydroperoxides such as H2O2, cumene hydroperoxide and tert-butyl hydroperoxide, as well as several fatty acid-derived hydroperoxides. In platelets catalyzes the reduction of 12-hydroperoxyeicosatetraenoic acid, the primary product of the arachidonate 12-lipoxygenase pathway. This is Glutathione peroxidase 1 (GPX1) from Oryctolagus cuniculus (Rabbit).